A 295-amino-acid polypeptide reads, in one-letter code: Aspartate carbamoyltransferase catalytic subunit (295 aa).

Residues arginine 49 and threonine 50 each coordinate carbamoyl phosphate. Position 77 (lysine 77) interacts with L-aspartate. Positions 99, 127, and 130 each coordinate carbamoyl phosphate. 2 residues coordinate L-aspartate: arginine 161 and arginine 212. Residues glycine 251 and proline 252 each coordinate carbamoyl phosphate.

Belongs to the aspartate/ornithine carbamoyltransferase superfamily. ATCase family. In terms of assembly, heterododecamer (2C3:3R2) of six catalytic PyrB chains organized as two trimers (C3), and six regulatory PyrI chains organized as three dimers (R2).

It catalyses the reaction carbamoyl phosphate + L-aspartate = N-carbamoyl-L-aspartate + phosphate + H(+). It functions in the pathway pyrimidine metabolism; UMP biosynthesis via de novo pathway; (S)-dihydroorotate from bicarbonate: step 2/3. Its function is as follows. Catalyzes the condensation of carbamoyl phosphate and aspartate to form carbamoyl aspartate and inorganic phosphate, the committed step in the de novo pyrimidine nucleotide biosynthesis pathway. The protein is Aspartate carbamoyltransferase catalytic subunit of Campylobacter jejuni (strain RM1221).